The primary structure comprises 160 residues: Ribosomal RNA large subunit methyltransferase H (160 aa).

Residues L76 and G108 each contribute to the S-adenosyl-L-methionine site.

The protein belongs to the RNA methyltransferase RlmH family. Homodimer.

Its subcellular location is the cytoplasm. The enzyme catalyses pseudouridine(1915) in 23S rRNA + S-adenosyl-L-methionine = N(3)-methylpseudouridine(1915) in 23S rRNA + S-adenosyl-L-homocysteine + H(+). In terms of biological role, specifically methylates the pseudouridine at position 1915 (m3Psi1915) in 23S rRNA. This Bradyrhizobium sp. (strain BTAi1 / ATCC BAA-1182) protein is Ribosomal RNA large subunit methyltransferase H.